Here is a 579-residue protein sequence, read N- to C-terminus: Pre-mRNA-processing factor 17 (579 aa).

Positions 1-19 (MSAAIAALAASYGSGSGSE) are enriched in low complexity. Disordered stretches follow at residues 1–47 (MSAA…PSSK) and 204–237 (DVAKPSEEEQKELDEITAKRQKKGKQEEEKPGEE). Position 46 is a phosphoserine (S46). 7 WD repeats span residues 286–326 (GHTK…RCLR), 330–369 (GHSKAVRDICFNTAGTQFLSAAYDRYLKLWDTETGQCISR), 371–413 (TNRK…IVQE), 416–455 (RHLGAVNTIVFVDENRRFVSTSDDKSLRVWEWDIPVDFKY), 459–498 (PSMHSMPAVTLSPNGKWLACQSMDNQILIFGAQNRFRLNK), 504–545 (GHMV…LYSR), and 548–578 (AHDKVCIGAVWHPHETSKVITCGWDGLIKLW).

In terms of assembly, component of the pre-catalytic and catalytic spliceosome complexes. Component of the postcatalytic spliceosome P complex. Interacts with PPIL1; this interaction leads to CDC40 isomerization. Undergoes isomerization of the peptide bond between Gly-94 and Pro-95. The reaction is catalyzed by PPIL1.

It localises to the nucleus. The protein resides in the nucleus speckle. Required for pre-mRNA splicing as component of the activated spliceosome. Plays an important role in embryonic brain development; this function does not require proline isomerization. The sequence is that of Pre-mRNA-processing factor 17 (CDC40) from Homo sapiens (Human).